Here is a 65-residue protein sequence, read N- to C-terminus: UPF0291 protein BBR47_33060 (65 aa).

The protein belongs to the UPF0291 family.

Its subcellular location is the cytoplasm. The protein is UPF0291 protein BBR47_33060 of Brevibacillus brevis (strain 47 / JCM 6285 / NBRC 100599).